Here is a 343-residue protein sequence, read N- to C-terminus: Protein FAM50A-B (343 aa).

Disordered stretches follow at residues 1–25 and 125–181; these read MAQYKGAASEAGRAMQLMKKREKQR and EEDE…EEEN. Residues 125 to 142 are compositionally biased toward acidic residues; it reads EEDEECEDEESEEEEEEY. A compositionally biased stretch (basic and acidic residues) spans 172 to 181; it reads PDRDREEEEN.

The protein belongs to the FAM50 family.

It is found in the nucleus. In terms of biological role, probably involved in the regulation of pre-mRNA splicing. In Xenopus laevis (African clawed frog), this protein is Protein FAM50A-B (fam50a-b).